Here is a 498-residue protein sequence, read N- to C-terminus: MQLSKYKNQSVAVFGLGKTGLSVINVLIKSGAKAYAWDDSKEQMANAKTMYKECNFIHPKKYDWHEIKALILSPGVPISYPKPHWIVKLARSFDCKIKSDIELFLEAKAKNQKIVGVTGTNGKSTTTSLIGHILKSAGKKVAIGGNLGVPILDLEKDAEIYVIEISSFQLELINMPAVIPVHDHTFFSGSQYRAAWMIKRVSEMTKKMTEVTKRMAGMIKVDISVLLNITLDHIDRHGSMENYIAVKSKLIGGSKVAVIGCDNEITADIFNKFTGNKIPISGVRSLLDDKKGAEIQEISLKLENHNLSASDAKINLTSNAENIAASCAVCKLLKVDSSTIIDGIKSFSGLKHRNELLGKIENVLFVNDSKATNAESSKKAILSYKNIYWIVGGRSKEGGIESLSKHFARIRKALLIGESTEVFASTMENKVDYVRCCNLEDAFRLAFEEAIKSKEKTTILLSPACASFDQWRNFEERGEAFCRMFEKLRDSFTITRVV.

119–125 contributes to the ATP binding site; sequence GTNGKST.

Belongs to the MurCDEF family.

It is found in the cytoplasm. It catalyses the reaction UDP-N-acetyl-alpha-D-muramoyl-L-alanine + D-glutamate + ATP = UDP-N-acetyl-alpha-D-muramoyl-L-alanyl-D-glutamate + ADP + phosphate + H(+). It participates in cell wall biogenesis; peptidoglycan biosynthesis. In terms of biological role, cell wall formation. Catalyzes the addition of glutamate to the nucleotide precursor UDP-N-acetylmuramoyl-L-alanine (UMA). The polypeptide is UDP-N-acetylmuramoylalanine--D-glutamate ligase (Wolbachia sp. subsp. Brugia malayi (strain TRS)).